The primary structure comprises 501 residues: NAD(P)H-quinone oxidoreductase chain 4, chloroplastic (501 aa).

14 helical membrane-spanning segments follow: residues 4–24, 35–55, 84–104, 111–129, 134–154, 168–188, 209–229, 243–263, 273–293, 306–326, 331–351, 387–407, 417–437, and 463–483; these read FPWL…ILFL, YTIC…CYHF, GLSI…TLAA, SRLL…IGSF, LLLF…LLSM, FILY…GMDL, ALEI…SPII, HYST…YGLI, AHSI…IYAA, IAYS…SITD, GAIL…FLAG, LALP…GIIT, ILIT…SLSM, and LFVS…PDFV.

The protein belongs to the complex I subunit 4 family.

It is found in the plastid. The protein localises to the chloroplast thylakoid membrane. It catalyses the reaction a plastoquinone + NADH + (n+1) H(+)(in) = a plastoquinol + NAD(+) + n H(+)(out). It carries out the reaction a plastoquinone + NADPH + (n+1) H(+)(in) = a plastoquinol + NADP(+) + n H(+)(out). The protein is NAD(P)H-quinone oxidoreductase chain 4, chloroplastic of Buxus microphylla (Littleleaf boxwood).